A 201-amino-acid chain; its full sequence is Recombination protein RecR (201 aa).

The segment at 60-75 adopts a C4-type zinc-finger fold; the sequence is CKTCGNIDTQNPCTVC. In terms of domain architecture, Toprim spans 83–178; it reads SIIVVVADVA…KVTRLAHGVP (96 aa).

The protein belongs to the RecR family.

Its function is as follows. May play a role in DNA repair. It seems to be involved in an RecBC-independent recombinational process of DNA repair. It may act with RecF and RecO. This is Recombination protein RecR from Rhodopseudomonas palustris (strain HaA2).